Here is a 443-residue protein sequence, read N- to C-terminus: CBL-interacting protein kinase 29 (443 aa).

The 261-residue stretch at 32–292 (YELGGLLGRG…TEEIITHPWF (261 aa)) folds into the Protein kinase domain. Residues 38–46 (LGRGASAKV) and Lys-61 each bind ATP. The active-site Proton acceptor is Asp-164. Residues 182–207 (DFGLGAVADGALHHTLCGTPAYVAPE) form an activation loop region. Residues 313–347 (AKFKTEFKEDDMARDMTAFDILACSPGSDLSGLFG) enclose the NAF domain. The tract at residues 350-379 (PGKERVFVGEPAAAVLSRVEEAGKKEGYMV) is PPI.

Belongs to the protein kinase superfamily. CAMK Ser/Thr protein kinase family. SNF1 subfamily. Requires Mn(2+) as cofactor.

The catalysed reaction is L-seryl-[protein] + ATP = O-phospho-L-seryl-[protein] + ADP + H(+). It carries out the reaction L-threonyl-[protein] + ATP = O-phospho-L-threonyl-[protein] + ADP + H(+). Its function is as follows. CIPK serine-threonine protein kinases interact with CBL proteins. Binding of a CBL protein to the regulatory NAF domain of CIPK protein lead to the activation of the kinase in a calcium-dependent manner. The sequence is that of CBL-interacting protein kinase 29 (CIPK29) from Oryza sativa subsp. japonica (Rice).